Reading from the N-terminus, the 138-residue chain is ATP synthase epsilon chain (138 aa).

The protein belongs to the ATPase epsilon chain family. In terms of assembly, F-type ATPases have 2 components, CF(1) - the catalytic core - and CF(0) - the membrane proton channel. CF(1) has five subunits: alpha(3), beta(3), gamma(1), delta(1), epsilon(1). CF(0) has three main subunits: a, b and c.

It is found in the cell inner membrane. Functionally, produces ATP from ADP in the presence of a proton gradient across the membrane. The chain is ATP synthase epsilon chain from Blochmanniella floridana.